Consider the following 91-residue polypeptide: Small ribosomal subunit protein bS16 (91 aa).

The protein belongs to the bacterial ribosomal protein bS16 family.

The chain is Small ribosomal subunit protein bS16 from Staphylococcus epidermidis (strain ATCC 35984 / DSM 28319 / BCRC 17069 / CCUG 31568 / BM 3577 / RP62A).